The chain runs to 885 residues: Chitobiase (885 aa).

Residues 1 to 27 (MNAFKLSALARLTATMGFLGGMGSAMA) form the signal peptide. 3 cysteine pairs are disulfide-bonded: C56-C66, C400-C408, and C505-C578. The Proton donor role is filled by E540. Residues 866–885 (EVQVRSVSPDGKRYSRAEKV) form a disordered region. The span at 875 to 885 (DGKRYSRAEKV) shows a compositional bias: basic and acidic residues.

This sequence belongs to the glycosyl hydrolase 20 family. Monomer.

It is found in the periplasm. It catalyses the reaction Hydrolysis of terminal non-reducing N-acetyl-D-hexosamine residues in N-acetyl-beta-D-hexosaminides.. It participates in glycan degradation; chitin degradation. Functionally, digests the beta-1,4-glycosidic bonds in N-acetylglucosamine (GlcNAc) oligomers (mainly dimers). This Serratia marcescens protein is Chitobiase (chb).